The primary structure comprises 601 residues: Protein NRT1/ PTR FAMILY 4.4 (601 aa).

2 consecutive transmembrane segments (helical) span residues 44–64 and 82–102; these read AALFVLGFQAFEMMAIAAVGN and ANLVTNFIGTVFLLSLLGGFL. Thr-112 bears the Phosphothreonine mark. 10 helical membrane passes run 113-133, 160-180, 198-218, 228-248, 337-357, 386-406, 420-440, 453-473, 493-513, and 544-564; these read MLVFGVIEISGFILLSVQAHL, TLYTALCLVALGSGCLKPNII, FFNAAYFAFSMGQLIALTLLV, VGFGVSAAVMAAGMISLVAGT, ILLSVIPIFACTIIFNTILAQ, AIPYIILIFFVPLYETFFVPL, LQRIGTGLFLATFSMVAAALV, VMLSIFWIAPQFLIFGLSEMF, FLTAMTYCSYSFGFYLSSVLV, and HFYWLLASLSFINFFNYLFWS.

This sequence belongs to the major facilitator superfamily. Proton-dependent oligopeptide transporter (POT/PTR) (TC 2.A.17) family. In terms of tissue distribution, expressed in shoots, roots and stems.

It is found in the membrane. In Arabidopsis thaliana (Mouse-ear cress), this protein is Protein NRT1/ PTR FAMILY 4.4 (NPF4.4).